The following is an 807-amino-acid chain: Protein FAR1-RELATED SEQUENCE 2 (807 aa).

Residues 52 to 138 enclose the FAR1 domain; the sequence is YFYREYARSV…VKEHNHEICP (87 aa). The 97-residue stretch at 219–315 folds into the MULE domain; that stretch reads VVLFDTFYVR…CLWSVLSKIS (97 aa). Residues 499–535 form an SWIM-type zinc finger; sequence FFVALNNELLDACCSCHLFEYQGFLCKHAILVLQSAD. A coiled-coil region spans residues 660 to 680; sequence EDATNRSEELRQETEQVSSRA. A compositionally biased stretch (polar residues) spans 788–798; the sequence is GSSQFQGSDSS. A disordered region spans residues 788–807; that stretch reads GSSQFQGSDSSHPSDHRLSN.

The protein belongs to the FHY3/FAR1 family. Expressed in hypocotyls, rosette and cauline leaves, inflorescences stems, flowers and siliques.

The protein localises to the nucleus. In terms of biological role, putative transcription activator involved in regulating light control of development. This chain is Protein FAR1-RELATED SEQUENCE 2 (FRS2), found in Arabidopsis thaliana (Mouse-ear cress).